A 199-amino-acid polypeptide reads, in one-letter code: SCO2-like protein RC0042 (199 aa).

This sequence belongs to the SCO1/2 family.

The sequence is that of SCO2-like protein RC0042 from Rickettsia conorii (strain ATCC VR-613 / Malish 7).